We begin with the raw amino-acid sequence, 217 residues long: UPF0323 lipoprotein HPSH_01205 (217 aa).

The first 27 residues, 1–27 (MKKPYRKISDYAIVGGLSALVMVSIVG), serve as a signal peptide directing secretion. Cysteine 28 carries the N-palmitoyl cysteine lipid modification. A lipid anchor (S-diacylglycerol cysteine) is attached at cysteine 28. Residues 160–171 (QRTYKSPQAYQR) show a composition bias toward polar residues. Residues 160–217 (QRTYKSPQAYQRSQNSFSKSAPSASSMGGASKGQSGFFGSSRPTSSPAVSSGTRGFNS) form a disordered region. Residues 172-210 (SQNSFSKSAPSASSMGGASKGQSGFFGSSRPTSSPAVSS) are compositionally biased toward low complexity.

This sequence belongs to the UPF0323 family.

It localises to the cell membrane. The protein is UPF0323 lipoprotein HPSH_01205 of Helicobacter pylori (strain Shi470).